The following is a 446-amino-acid chain: Exodeoxyribonuclease 7 large subunit (446 aa).

The protein belongs to the XseA family. Heterooligomer composed of large and small subunits.

The protein resides in the cytoplasm. The enzyme catalyses Exonucleolytic cleavage in either 5'- to 3'- or 3'- to 5'-direction to yield nucleoside 5'-phosphates.. Its function is as follows. Bidirectionally degrades single-stranded DNA into large acid-insoluble oligonucleotides, which are then degraded further into small acid-soluble oligonucleotides. The protein is Exodeoxyribonuclease 7 large subunit of Streptococcus pyogenes serotype M6 (strain ATCC BAA-946 / MGAS10394).